The primary structure comprises 62 residues: Sperm protamine P1 (62 aa).

Residues 1 to 62 are disordered; that stretch reads MARYRRHSRS…RRYSRRRRRY (62 aa).

This sequence belongs to the protamine P1 family. In terms of tissue distribution, testis.

It localises to the nucleus. The protein localises to the chromosome. Protamines substitute for histones in the chromatin of sperm during the haploid phase of spermatogenesis. They compact sperm DNA into a highly condensed, stable and inactive complex. In Sminthopsis longicaudata (Long-tailed dunnart), this protein is Sperm protamine P1 (PRM1).